The primary structure comprises 429 residues: Probable proton-coupled zinc antiporter SLC30A4 (429 aa).

Topologically, residues 1-113 (MAGSGAWKRL…ILKQRKVKAR (113 aa)) are cytoplasmic. A helical transmembrane segment spans residues 114–134 (LTIAAVLYLLFMIGELVGGYI). Residues 135–143 (ANSLAIMTD) lie on the Lumenal side of the membrane. Residues 144 to 164 (ALHMLTDLSAIILTLLALWLS) traverse the membrane as a helical segment. Histidine 146 and aspartate 150 together coordinate Zn(2+). Topologically, residues 165 to 178 (SKSPTKRFTFGFHR) are cytoplasmic. The chain crosses the membrane as a helical span at residues 179-199 (LEVLSAMISVLLVYILMGFLL). Over 200–216 (YEAVQRTIHMNYEINGD) the chain is Lumenal. A helical transmembrane segment spans residues 217-237 (IMLITAAVGVAVNVIMGFLLN). Residues 238–274 (QSGHRHSHSHSLPSNSPTRGSGCERNHGQDSLAVRAA) lie on the Cytoplasmic side of the membrane. The zinc binding stretch occupies residues 240 to 264 (GHRHSHSHSLPSNSPTRGSGCERNH). Residues 275–295 (FVHALGDLVQSVGVLIAAYII) form a helical membrane-spanning segment. Residues histidine 277 and aspartate 281 each coordinate Zn(2+). The Lumenal segment spans residues 296-310 (RFKPEYKIADPICTY). A helical membrane pass occupies residues 311 to 331 (VFSLLVAFTTFRIIWDTVVII). Residues 332–429 (LEGVPSHLNV…TCANCQSSSP (98 aa)) are Cytoplasmic-facing.

This sequence belongs to the cation diffusion facilitator (CDF) transporter (TC 2.A.4) family. SLC30A subfamily. As to quaternary structure, homodimer; dityrosine-linked. Homodimerization could be specific of the human protein and enhances the zinc transport efficiency. Interacts with TMEM163. In terms of processing, homodimerization through dityrosine bonds is stimulated by oxidative stress.

The protein localises to the endosome membrane. It is found in the late endosome membrane. It localises to the lysosome membrane. It carries out the reaction Zn(2+)(in) + 2 H(+)(out) = Zn(2+)(out) + 2 H(+)(in). In terms of biological role, probable proton-coupled zinc ion antiporter mediating zinc import from cytoplasm potentially into the endocytic compartment. Controls zinc deposition in milk. In Homo sapiens (Human), this protein is Probable proton-coupled zinc antiporter SLC30A4.